Reading from the N-terminus, the 84-residue chain is uncharacterized protein (84 aa).

The helical transmembrane segment at 10-32 threads the bilayer; sequence AFSLAYYIIIHLLCLSYIYEIIH.

The protein localises to the membrane. This is an uncharacterized protein from Saccharomyces cerevisiae (strain ATCC 204508 / S288c) (Baker's yeast).